The primary structure comprises 474 residues: MFS transporter SAT21 (474 aa).

6 consecutive transmembrane segments (helical) span residues 7 to 27 (LVLP…LEVP), 64 to 84 (LVVG…ILYF), 101 to 121 (CVGY…HQVF), 131 to 151 (LFLF…AFVA), 162 to 182 (FLFL…ALAT), and 189 to 209 (LFLP…LLQM). The disordered stretch occupies residues 220–252 (KVVGSTSDQTEPFLRSSSNSSQESGTAAPAIDP). A compositionally biased stretch (polar residues) spans 222 to 244 (VGSTSDQTEPFLRSSSNSSQESG). Residue asparagine 238 is glycosylated (N-linked (GlcNAc...) asparagine). The next 6 helical transmembrane spans lie at 276 to 296 (FICY…AFIF), 315 to 335 (LALS…ANAT), 346 to 366 (INIG…IMAW), 374 to 394 (FIFS…LQGV), 406 to 426 (SIFA…GPLM), and 445 to 465 (FLAS…LWAL).

Belongs to the major facilitator superfamily.

It is found in the cell membrane. Functionally, MFS transporter; part of the satratoxin SC3 cluster involved in the biosynthesis of satratoxins, trichothecene mycotoxins that are associated with human food poisonings. Satratoxins are suggested to be made by products of multiple gene clusters (SC1, SC2 and SC3) that encode 21 proteins in all, including polyketide synthases, acetyltransferases, and other enzymes expected to modify the trichothecene skeleton. SC1 encodes 10 proteins, SAT1 to SAT10. The largest are SAT8, which encodes a putative polyketide synthase (PKS) with a conventional non-reducing architecture, and SAT10, a putative protein containing four ankyrin repeats and thus may be involved in protein scaffolding. The putative short-chain reductase SAT3 may assist the PKS in some capacity. SAT6 contains a secretory lipase domain and acts probably as a trichothecene esterase. SAT5 encodes a putative acetyltransferase, and so, with SAT6, may affect endogenous protection from toxicity. The probable transcription factor SAT9 may regulate the expression of the SC1 cluster. SC2 encodes proteins SAT11 to SAT16, the largest of which encodes the putative reducing PKS SAT13. SAT11 is a cytochrome P450 monooxygenase, while SAT14 and SAT16 are probable acetyltransferases. The SC2 cluster may be regulated by the transcription factor SAT15. SC3 is a small cluster that encodes 5 proteins, SAT17 to SAT21. SAT21 is a putative MFS-type transporter which may have a role in exporting secondary metabolites. The four other proteins putatively encoded in SC3 include the taurine hydroxylase-like protein SAT17, the O-methyltransferase SAT18, the acetyltransferase SAT19, and the Cys6-type zinc finger SAT20, the latter being probably involved in regulation of SC3 expression. This chain is MFS transporter SAT21, found in Stachybotrys chartarum (strain CBS 109288 / IBT 7711) (Toxic black mold).